Here is a 1607-residue protein sequence, read N- to C-terminus: Phosphatidylinositol 3-kinase piki-1 (1607 aa).

Residues 2–21 form the UIM domain; sequence SDDEELQLAIEISKKTFKDE. Disordered regions lie at residues 54–91, 105–128, and 142–182; these read EANS…HSQS, STSQ…KFPP, and PPPP…SFAS. Polar residues predominate over residues 58-69; the sequence is PGPSSYSGSLAT. Residues 158–169 show a composition bias toward pro residues; it reads PPVPIHPTPPVS. Residues 362–453 enclose the PI3K-RBD domain; sequence ASTVKVVVYK…GDDVKLDLGV (92 aa). Residues 598–766 enclose the C2 PI3K-type domain; the sequence is KMDFLQIMLN…KIWDTEIYFP (169 aa). Positions 776–953 constitute a PIK helical domain; the sequence is PQDFATLDIE…AIRCQNLQQK (178 aa). Positions 1029-1303 constitute a PI3K/PI4K catalytic domain; sequence RIEECSVFNS…MIQNSLGSAF (275 aa). Residues 1035-1041 are G-loop; it reads VFNSNAK. Residues 1168 to 1176 are catalytic loop; the sequence is GIGDRHNDN. Residues 1187–1213 are activation loop; that stretch reads HIDFGKYMGDWQMAAGFRRDRVPFVFT. The PX domain maps to 1344–1458; it reads GRISRVTVLK…TFFHSILRDN (115 aa). Residues 1472-1601 enclose the C2 domain; the sequence is SQCQIYLKIE…KNCRTLEGWF (130 aa).

Belongs to the PI3/PI4-kinase family.

The protein resides in the cell projection. It is found in the phagocytic cup. It localises to the cytoplasmic vesicle. The protein localises to the phagosome membrane. Its subcellular location is the cytoplasm. The enzyme catalyses a 1,2-diacyl-sn-glycero-3-phospho-(1D-myo-inositol) + ATP = a 1,2-diacyl-sn-glycero-3-phospho-(1D-myo-inositol-3-phosphate) + ADP + H(+). Phosphatidylinositol 3-kinase involved in clearance of apoptotic cell corpses by phagosomes. Phagosome maturation requires two sequential and non-overlapping pulses of phosphatidylinositol-3-phosphate (PI3P) on the vesicle surface which mediates recruitment of sortins snx-1 and lst-4 and small GTPases rab-5, rab-2 and rab-7. The first pulse is initiated by piki-1, then maintained by vps-34 which also produces the second pulse. Unlike vps-34, not involved in the formation of PI3P in early endosomes. The polypeptide is Phosphatidylinositol 3-kinase piki-1 (Caenorhabditis elegans).